The following is an 84-amino-acid chain: Mu-conotoxin-like Cal 12.2a (84 aa).

Positions 1–19 are cleaved as a signal peptide; sequence MKLTCVLVVLLLVLPFGDL. Residues 20-42 constitute a propeptide that is removed on maturation; that stretch reads ITTSNTEDNKRGATPWQNSLKAR. Cystine bridges form between cysteine 45–cysteine 57, cysteine 52–cysteine 65, cysteine 59–cysteine 70, and cysteine 64–cysteine 76. Proline 48 bears the 4-hydroxyproline mark. Tryptophan 72 carries the 6'-bromotryptophan modification. Proline 77 bears the 4-hydroxyproline mark. Tryptophan 81 is modified (6'-bromotryptophan).

This sequence belongs to the conotoxin O1 superfamily. In terms of tissue distribution, expressed by the venom duct.

The protein localises to the secreted. Functionally, mu-conotoxins block voltage-gated sodium channels. This toxin reversibly blocks voltage-gated sodium channel in cephalopods, with no alteration in the voltage dependence of sodium conductance or on the kinetics of inactivation. This is Mu-conotoxin-like Cal 12.2a from Californiconus californicus (California cone).